We begin with the raw amino-acid sequence, 529 residues long: 1,4-beta-D-glucan cellobiohydrolase xynA (529 aa).

An N-terminal signal peptide occupies residues 1-25 (MSALNSFNMYKSALILGSLLATAGA). Positions 26-456 (QQIGTYTAET…SDIKVGPFNS (431 aa)) are catalytic. 2 N-linked (GlcNAc...) asparagine glycosylation sites follow: Asn-70 and Asn-219. Residue Glu-234 is the Nucleophile of the active site. Residue Glu-239 is the Proton donor of the active site. Asn-413 is a glycosylation site (N-linked (GlcNAc...) asparagine). The tract at residues 413–438 (NETGTPGAARGSCPTTSGNPKTVESQ) is disordered. Polar residues predominate over residues 425 to 438 (CPTTSGNPKTVESQ). The N-linked (GlcNAc...) asparagine glycan is linked to Asn-455. The segment at 457 to 493 (TFSGGTSTGGSTTTTASGTTSTKASTTSTSSTSTGTG) is thr-rich linker. The interval 460–491 (GGTSTGGSTTTTASGTTSTKASTTSTSSTSTG) is disordered. One can recognise a CBM1 domain in the interval 493 to 529 (GVAAHWGQCGGQGWTGPTTCASGTTCTVVNPYYSQCL). 2 disulfide bridges follow: Cys-501–Cys-518 and Cys-512–Cys-528.

This sequence belongs to the glycosyl hydrolase 7 (cellulase C) family.

The protein resides in the secreted. The enzyme catalyses Hydrolysis of (1-&gt;4)-beta-D-glucosidic linkages in cellulose and cellotetraose, releasing cellobiose from the non-reducing ends of the chains.. Cellobiose inhibits xynA at high concentrations. The biological conversion of cellulose to glucose generally requires three types of hydrolytic enzymes: (1) Endoglucanases which cut internal beta-1,4-glucosidic bonds; (2) Exocellobiohydrolases that cut the disaccharide cellobiose from the non-reducing end of the cellulose polymer chain; (3) Beta-1,4-glucosidases which hydrolyze the cellobiose and other short cello-oligosaccharides to glucose. The chain is 1,4-beta-D-glucan cellobiohydrolase xynA (xynA) from Talaromyces funiculosus (Fruitlet core rot fungus).